Consider the following 94-residue polypeptide: Aspartyl/glutamyl-tRNA(Asn/Gln) amidotransferase subunit C (94 aa).

Belongs to the GatC family. Heterotrimer of A, B and C subunits.

The enzyme catalyses L-glutamyl-tRNA(Gln) + L-glutamine + ATP + H2O = L-glutaminyl-tRNA(Gln) + L-glutamate + ADP + phosphate + H(+). It catalyses the reaction L-aspartyl-tRNA(Asn) + L-glutamine + ATP + H2O = L-asparaginyl-tRNA(Asn) + L-glutamate + ADP + phosphate + 2 H(+). Allows the formation of correctly charged Asn-tRNA(Asn) or Gln-tRNA(Gln) through the transamidation of misacylated Asp-tRNA(Asn) or Glu-tRNA(Gln) in organisms which lack either or both of asparaginyl-tRNA or glutaminyl-tRNA synthetases. The reaction takes place in the presence of glutamine and ATP through an activated phospho-Asp-tRNA(Asn) or phospho-Glu-tRNA(Gln). This Carboxydothermus hydrogenoformans (strain ATCC BAA-161 / DSM 6008 / Z-2901) protein is Aspartyl/glutamyl-tRNA(Asn/Gln) amidotransferase subunit C.